Here is a 1663-residue protein sequence, read N- to C-terminus: Cortactin-binding protein 2 (1663 aa).

Disordered stretches follow at residues 1–26 (MATD…TAEA), 203–225 (KKKT…DMEA), 359–440 (QASH…LHPG), 454–478 (GNAN…SPTS), and 497–615 (SRFT…PPKP). Residues 119 to 276 (RKMQERMSTQ…EQLKRGSDSK (158 aa)) adopt a coiled-coil conformation. Composition is skewed to polar residues over residues 385–396 (GPSTDSAPDLTN) and 418–435 (QSHS…SANA). At arginine 498 the chain carries Asymmetric dimethylarginine. Pro residues predominate over residues 606–615 (PTTPQLPPKP). ANK repeat units follow at residues 709 to 739 (GRPT…DINY), 743 to 772 (DGHS…QVDA), 776 to 805 (NGFT…DINH), 809 to 838 (GGQT…DRSV), 842 to 871 (DGWT…PARG), and 912 to 942 (EGWT…EPDR). The interval 1449–1490 (KGENGTWRKVSTSPRKKSGHFSSPTWNKPDLNEEGIRNTTTS) is disordered. Phosphoserine is present on serine 1524. The interval 1579–1663 (VSEKEVSPLS…KNEQVEKPNK (85 aa)) is disordered. The span at 1586–1595 (PLSSHQTTEC) shows a compositional bias: polar residues. Positions 1624-1638 (SQNTKRSSSSSNTRQ) are enriched in low complexity. The span at 1645–1663 (SKEEIWNLHKNEQVEKPNK) shows a compositional bias: basic and acidic residues.

In terms of assembly, interacts with CTTN/cortactin SH3 domain. Interacts with STRN, STRN4/zinedin and MOB4/phocein; this interactions mediate the association with the STRIPAK core complex and may regulate dendritic spine distribution of the STRIPAK complex in hippocampal neurons. Activation of glutamate receptors weakens the interaction with STRN and STRN4.

The protein localises to the cytoplasm. It localises to the cell cortex. It is found in the cell projection. The protein resides in the dendritic spine. Functionally, regulates the dendritic spine distribution of CTTN/cortactin in hippocampal neurons, and thus controls dendritic spinogenesis and dendritic spine maintenance. Associates with the striatin-interacting phosphatase and kinase (STRIPAK) core complex to regulate dendritic spine distribution of the STRIPAK complex in hippocampal neurons. This Rhinolophus ferrumequinum (Greater horseshoe bat) protein is Cortactin-binding protein 2 (CTTNBP2).